The sequence spans 373 residues: Protein SENSITIVE TO PROTON RHIZOTOXICITY 2 (373 aa).

2 consecutive C2H2-type zinc fingers follow at residues 217 to 239 and 327 to 362; these read HYCQ…MRAH and KHCG…VPAH.

As to expression, expressed at low levels in roots (e.g. root tips and lateral roots), leaves (e.g. at the edge of mature leaves, possibly in hydathodes, and in vascular bundles), flowers (e.g. floral filaments), stems, siliques and cotyledons.

The protein localises to the nucleus. In terms of biological role, probable transcription factor. Together with STOP1, plays a critical role in tolerance to major stress factors in acid soils such as proton H(+) and aluminum ion Al(3+). Required for the expression of genes in response to acidic stress (e.g. ALMT1 and MATE), and Al-activated citrate exudation. The polypeptide is Protein SENSITIVE TO PROTON RHIZOTOXICITY 2 (Arabidopsis thaliana (Mouse-ear cress)).